The chain runs to 617 residues: Leucine aminopeptidase 2 (617 aa).

A peptide is bound by residues 139–141 (QCQ) and 271–276 (PYGGME). A Zn(2+)-binding site is contributed by histidine 300. Glutamate 301 acts as the Proton acceptor in catalysis. Positions 304 and 323 each coordinate Zn(2+). Tyrosine 388 serves as the catalytic Proton donor.

It belongs to the peptidase M1 family. Requires Zn(2+) as cofactor.

The protein localises to the cytoplasm. It is found in the nucleus. The catalysed reaction is an epoxide + H2O = an ethanediol. In terms of biological role, aminopeptidase that preferentially cleaves di- and tripeptides. Also has low epoxide hydrolase activity (in vitro). Can hydrolyze the epoxide leukotriene LTA(4) but it forms preferentially 5,6-dihydroxy-7,9,11,14-eicosatetraenoic acid rather than the cytokine leukotriene B(4) as the product compared to the homologous mammalian enzyme (in vitro). This is Leucine aminopeptidase 2 from Neosartorya fischeri (strain ATCC 1020 / DSM 3700 / CBS 544.65 / FGSC A1164 / JCM 1740 / NRRL 181 / WB 181) (Aspergillus fischerianus).